We begin with the raw amino-acid sequence, 261 residues long: Global transcriptional regulator CodY (261 aa).

Positions 1–159 (MPNLLEKTRK…ASTVVGIQLL (159 aa)) are GAF domain. Positions 207–226 (ASVIADRIGITRSVIVNALR) form a DNA-binding region, H-T-H motif.

This sequence belongs to the CodY family.

It is found in the cytoplasm. Functionally, DNA-binding global transcriptional regulator which is involved in the adaptive response to starvation and acts by directly or indirectly controlling the expression of numerous genes in response to nutrient availability. During rapid exponential growth, CodY is highly active and represses genes whose products allow adaptation to nutrient depletion. In Streptococcus agalactiae serotype III (strain NEM316), this protein is Global transcriptional regulator CodY.